A 323-amino-acid chain; its full sequence is tRNA U34 carboxymethyltransferase (323 aa).

Carboxy-S-adenosyl-L-methionine contacts are provided by residues lysine 91, tryptophan 105, lysine 110, glycine 130, 152 to 154 (DPT), 181 to 182 (IE), methionine 196, tyrosine 200, and arginine 315.

This sequence belongs to the class I-like SAM-binding methyltransferase superfamily. CmoB family. In terms of assembly, homotetramer.

The catalysed reaction is carboxy-S-adenosyl-L-methionine + 5-hydroxyuridine(34) in tRNA = 5-carboxymethoxyuridine(34) in tRNA + S-adenosyl-L-homocysteine + H(+). Catalyzes carboxymethyl transfer from carboxy-S-adenosyl-L-methionine (Cx-SAM) to 5-hydroxyuridine (ho5U) to form 5-carboxymethoxyuridine (cmo5U) at position 34 in tRNAs. In Salmonella typhi, this protein is tRNA U34 carboxymethyltransferase.